The chain runs to 324 residues: Anthranilate phosphoribosyltransferase (324 aa).

5-phospho-alpha-D-ribose 1-diphosphate-binding positions include G72, 75–76 (GD), T80, 82–85 (NVST), 99–107 (KHGNVSVTS), and S111. G72 lines the anthranilate pocket. Residue S84 coordinates Mg(2+). Residue N102 participates in anthranilate binding. R157 serves as a coordination point for anthranilate. Mg(2+) contacts are provided by D215 and E216.

The protein belongs to the anthranilate phosphoribosyltransferase family. In terms of assembly, homodimer. It depends on Mg(2+) as a cofactor.

It catalyses the reaction N-(5-phospho-beta-D-ribosyl)anthranilate + diphosphate = 5-phospho-alpha-D-ribose 1-diphosphate + anthranilate. It participates in amino-acid biosynthesis; L-tryptophan biosynthesis; L-tryptophan from chorismate: step 2/5. Its function is as follows. Catalyzes the transfer of the phosphoribosyl group of 5-phosphorylribose-1-pyrophosphate (PRPP) to anthranilate to yield N-(5'-phosphoribosyl)-anthranilate (PRA). This chain is Anthranilate phosphoribosyltransferase, found in Pyrococcus furiosus (strain ATCC 43587 / DSM 3638 / JCM 8422 / Vc1).